We begin with the raw amino-acid sequence, 486 residues long: Elastin-binding protein EbpS (486 aa).

Positions 1–40 (MSNNFKDDFEKNRQSIDTNSHQDHTEDVEKDQSELEHQDT) are enriched in basic and acidic residues. A disordered region spans residues 1–314 (MSNNFKDDFE…HHDRDKERKK (314 aa)). Topologically, residues 2–204 (SNNFKDDFEK…ESKDHHSGKK (203 aa)) are extracellular. The segment at 14–34 (QSIDTNSHQDHTEDVEKDQSE) is elastin-binding. Polar residues predominate over residues 64 to 85 (TNHNKQVHNESQTSEDNVQNEA). Composition is skewed to basic and acidic residues over residues 103 to 117 (EPSH…EEGY), 126 to 160 (DKSH…KSEA), and 180 to 199 (SKDK…SKDH). Residues 204–225 (KGAAIGAGTAGVAGAAGAMGVS) are compositionally biased toward low complexity. Residues 205–225 (GAAIGAGTAGVAGAAGAMGVS) traverse the membrane as a helical segment. The Cytoplasmic segment spans residues 226 to 319 (KAKKHSNDAQ…KERKKGGMAK (94 aa)). Over residues 233–246 (DAQNKSNSGKVNNS) the composition is skewed to polar residues. The span at 247-259 (TEDKASEDKSKEH) shows a compositional bias: basic and acidic residues. A compositionally biased stretch (low complexity) spans 278–297 (GAASNSASAASKPHASNNAS). Residues 300-314 (NDEHDHHDRDKERKK) are compositionally biased toward basic and acidic residues. A helical membrane pass occupies residues 320 to 340 (VLLPLIAAVLIIGALAIFGGM). Topologically, residues 341 to 486 (ALNNHNNGTK…IRNGQQIVIP (146 aa)) are extracellular. Residues 351-440 (ENKIANTNKN…QRQGGGQRHT (90 aa)) are disordered. A compositionally biased stretch (basic and acidic residues) spans 361–398 (NADESKDKDTSKDASKDKSKSTDSDKSKDDQDKATKDE). Low complexity predominate over residues 403 to 431 (QNNANQANNQAQNNQNQQQANQNQQQQQQ). The LysM domain maps to 437–485 (QRHTVNGQENLYRIAIQYYGSGSPENVEKIRRANGLSGNNIRNGQQIVI).

It is found in the cell membrane. Functionally, promotes binding of soluble elastin peptides and tropoelastin to S.aureus cells although it is not able to promote bacterial adherence to immobilized elastin and, therefore, is not a microbial surface component recognizing adhesive matrix molecule (MSCRAMM). The sequence is that of Elastin-binding protein EbpS (ebpS) from Staphylococcus aureus (strain MRSA252).